A 388-amino-acid polypeptide reads, in one-letter code: S-adenosylmethionine synthase (388 aa).

His-17 provides a ligand contact to ATP. Position 19 (Asp-19) interacts with Mg(2+). Glu-45 lines the K(+) pocket. L-methionine contacts are provided by Glu-58 and Gln-106. The tract at residues 106–116 (QSAHIAQGVDK) is flexible loop. ATP is bound by residues 166–168 (DAK), Asp-241, 247–248 (RK), Ala-264, and Lys-268. Residue Asp-241 participates in L-methionine binding. Lys-272 is a binding site for L-methionine.

Belongs to the AdoMet synthase family. As to quaternary structure, homotetramer; dimer of dimers. It depends on Mg(2+) as a cofactor. The cofactor is K(+).

The protein localises to the cytoplasm. The catalysed reaction is L-methionine + ATP + H2O = S-adenosyl-L-methionine + phosphate + diphosphate. Its pathway is amino-acid biosynthesis; S-adenosyl-L-methionine biosynthesis; S-adenosyl-L-methionine from L-methionine: step 1/1. Catalyzes the formation of S-adenosylmethionine (AdoMet) from methionine and ATP. The overall synthetic reaction is composed of two sequential steps, AdoMet formation and the subsequent tripolyphosphate hydrolysis which occurs prior to release of AdoMet from the enzyme. The polypeptide is S-adenosylmethionine synthase (Cereibacter sphaeroides (strain ATCC 17023 / DSM 158 / JCM 6121 / CCUG 31486 / LMG 2827 / NBRC 12203 / NCIMB 8253 / ATH 2.4.1.) (Rhodobacter sphaeroides)).